The sequence spans 172 residues: Cyclin-L1 (172 aa).

The tract at residues 1-36 (MASGPHSTATAAAAASSAAPSAGGSSSGTTTTTTTT) is disordered. Residues 88–168 (ELIQAAGILL…LRGKSDQLHL (81 aa)) are cyclin-like.

It belongs to the cyclin family. Cyclin L subfamily. In terms of assembly, interacts with POLR2A via its hyperphosphorylated C-terminal domain (CTD). Interacts with CDK11A, CDK11B, CDK12 and CDK13. May form a ternary complex with CDK11B and casein kinase II (CKII). Interacts with pre-mRNA-splicing factors, including at least SRSF1, SRSF2 and SRSF7/SLU7.

It localises to the nucleus speckle. Its subcellular location is the nucleus. The protein localises to the nucleoplasm. Involved in pre-mRNA splicing. Functions in association with cyclin-dependent kinases (CDKs). May play a role in the regulation of RNA polymerase II (pol II). Inhibited by the CDK-specific inhibitor CDKN1A/p21. The chain is Cyclin-L1 (CCNL1) from Pongo abelii (Sumatran orangutan).